The sequence spans 135 residues: Galectin-1 (135 aa).

An N-acetylalanine modification is found at alanine 2. The 132-residue stretch at 4–135 folds into the Galectin domain; the sequence is GLVASNLNLK…DFKIKCVAFE (132 aa). An N6-acetyllysine mark is found at lysine 13 and lysine 29. A Phosphoserine modification is found at serine 30. A beta-D-galactoside contacts are provided by residues 45 to 49, histidine 53, asparagine 62, and 69 to 72; these read HFNPR and WGAE. N6-acetyllysine; alternate is present on lysine 108. Lysine 108 is subject to N6-succinyllysine; alternate. Lysine 128 bears the N6-acetyllysine mark.

In terms of assembly, homodimer. Binds LGALS3BP. Interacts with CD2, CD3, CD4, CD6, CD7, CD43, ALCAM and CD45. Interacts with laminin (via poly-N-acetyllactosamine). Interacts with SUSD2. Interacts with cargo receptor TMED10; the interaction mediates the translocation from the cytoplasm into the ERGIC (endoplasmic reticulum-Golgi intermediate compartment) and thereby secretion.

It localises to the secreted. Its subcellular location is the extracellular space. The protein resides in the extracellular matrix. It is found in the cytoplasm. Functionally, lectin that binds beta-galactoside and a wide array of complex carbohydrates. Plays a role in regulating apoptosis, cell proliferation and cell differentiation. Inhibits CD45 protein phosphatase activity and therefore the dephosphorylation of Lyn kinase. Strong inducer of T-cell apoptosis. This chain is Galectin-1 (LGALS1), found in Bos taurus (Bovine).